A 145-amino-acid polypeptide reads, in one-letter code: Leptin (145 aa).

Cysteine 95 and cysteine 145 form a disulfide bridge.

It belongs to the leptin family.

It is found in the secreted. Functionally, key player in the regulation of energy balance and body weight control. Once released into the circulation, has central and peripheral effects by binding LEPR, found in many tissues, which results in the activation of several major signaling pathways. The chain is Leptin (LEP) from Meleagris gallopavo (Wild turkey).